The chain runs to 361 residues: MTSPCSFPLKPTISPIIHETPDTNIPPPLPLNPPDLALPSPPCSLHTSISSPLPPPPPPPAPPPPPPPPPLPSAVEPVLPHVYGLKNSQLLKEALEKAGPAPKGKEDVKRLLKLHKDRFRSDLQWILFCADLPSCIQEGPQCGLVALWMAEALLSTPDSVSLERLVQVAKERGYTAQGEMFSVADMAKLAQETLDCQAELLCGGLGGPNRERVLQHLITGHPLLIPYDEDFNHEPCQKKGHKAHWAVSAGVLIGVQNVPSPGYIEDSELPGLFHPVPGAPHQPPSFPEESSPGALFLLSKQGKSWHYQLWDYSQVRESNLQLTDFSPARAADGQVYVVPAGGVEAGLCGQALLLRPQEGSH.

Residues 1–75 (MTSPCSFPLK…PPPPPLPSAV (75 aa)) are disordered. 2 stretches are compositionally biased toward pro residues: residues 24-33 (NIPPPLPLNP) and 52-72 (PLPP…PPLP). The interval 134-254 (SCIQEGPQCG…WAVSAGVLIG (121 aa)) is peptidase C39-like. Cys142 is a catalytic residue.

It belongs to the ACTMAP family. Interacts (via N-terminus) with PFN2 isoforms 1/IIa and 2/IIb; the interactions may facilitate efficient cleavage of the acetylated N-terminus of immature actin. Interacts with PFN1.

The protein localises to the cytoplasm. It catalyses the reaction N-terminal N(alpha)-acetyl-L-methionyl-L-aspartyl-[protein] + H2O = N-terminal L-aspartyl-[protein] + N-acetyl-L-methionine. The catalysed reaction is N-terminal N(alpha)-acetyl-L-methionyl-L-glutamyl-[protein] + H2O = N-terminal L-glutamyl-[protein] + N-acetyl-L-methionine. It carries out the reaction N-terminal N(alpha)-acetyl-L-cysteinyl-L-aspartyl-[protein] + H2O = N-terminal L-aspartyl-[protein] + N-acetyl-L-cysteine. The enzyme catalyses N-terminal N(alpha)-acetyl-L-cysteinyl-L-glutamyl-[protein] + H2O = N-terminal L-glutamyl-[protein] + N-acetyl-L-cysteine. In terms of biological role, actin maturation protease that specifically mediates the cleavage of immature acetylated N-terminal actin, thereby contributing to actin maturation. Cleaves N-terminal acetylated methionine of immature cytoplasmic beta- and gamma-actins Actb and Actg1 after translation. Cleaves N-terminal acetylated cysteine of muscle alpha-actins Acta1, Actc1 and Acta2 after canonical removal of N-terminal methionine. The sequence is that of Actin maturation protease from Mus musculus (Mouse).